Reading from the N-terminus, the 183-residue chain is ATP synthase subunit delta (183 aa).

The protein belongs to the ATPase delta chain family. As to quaternary structure, F-type ATPases have 2 components, F(1) - the catalytic core - and F(0) - the membrane proton channel. F(1) has five subunits: alpha(3), beta(3), gamma(1), delta(1), epsilon(1). F(0) has three main subunits: a(1), b(2) and c(10-14). The alpha and beta chains form an alternating ring which encloses part of the gamma chain. F(1) is attached to F(0) by a central stalk formed by the gamma and epsilon chains, while a peripheral stalk is formed by the delta and b chains.

It is found in the cell inner membrane. Its function is as follows. F(1)F(0) ATP synthase produces ATP from ADP in the presence of a proton or sodium gradient. F-type ATPases consist of two structural domains, F(1) containing the extramembraneous catalytic core and F(0) containing the membrane proton channel, linked together by a central stalk and a peripheral stalk. During catalysis, ATP synthesis in the catalytic domain of F(1) is coupled via a rotary mechanism of the central stalk subunits to proton translocation. This protein is part of the stalk that links CF(0) to CF(1). It either transmits conformational changes from CF(0) to CF(1) or is implicated in proton conduction. The chain is ATP synthase subunit delta from Desulfovibrio desulfuricans (strain ATCC 27774 / DSM 6949 / MB).